The chain runs to 445 residues: Tubulin beta chain (445 aa).

8 residues coordinate GTP: Gln-11, Glu-69, Ser-138, Gly-142, Thr-143, Gly-144, Asn-204, and Asn-226. Glu-69 contacts Mg(2+). The disordered stretch occupies residues 426–445 (QDATAEEEGEFEEEEGDVEA). Residues 429–445 (TAEEEGEFEEEEGDVEA) are compositionally biased toward acidic residues.

This sequence belongs to the tubulin family. In terms of assembly, dimer of alpha and beta chains. A typical microtubule is a hollow water-filled tube with an outer diameter of 25 nm and an inner diameter of 15 nM. Alpha-beta heterodimers associate head-to-tail to form protofilaments running lengthwise along the microtubule wall with the beta-tubulin subunit facing the microtubule plus end conferring a structural polarity. Microtubules usually have 13 protofilaments but different protofilament numbers can be found in some organisms and specialized cells. Interacts with DCX/apicortin; the interaction stabilizes microtubule assembly. Requires Mg(2+) as cofactor.

The protein resides in the cytoplasm. Its subcellular location is the cytoskeleton. Functionally, tubulin is the major constituent of microtubules, a cylinder consisting of laterally associated linear protofilaments composed of alpha- and beta-tubulin heterodimers. Microtubules grow by the addition of GTP-tubulin dimers to the microtubule end, where a stabilizing cap forms. Below the cap, tubulin dimers are in GDP-bound state, owing to GTPase activity of alpha-tubulin. The protein is Tubulin beta chain of Plasmodium falciparum (isolate 3D7).